Here is a 357-residue protein sequence, read N- to C-terminus: tRNA-specific 2-thiouridylase MnmA (357 aa).

Residues 7–14 (GLSGGVDS) and methionine 33 each bind ATP. Residues 94–96 (NPD) form an interaction with target base in tRNA region. Residue cysteine 99 is the Nucleophile of the active site. A disulfide bridge links cysteine 99 with cysteine 195. Glycine 123 provides a ligand contact to ATP. Positions 145–147 (KDQ) are interaction with tRNA. Cysteine 195 (cysteine persulfide intermediate) is an active-site residue. The interaction with tRNA stretch occupies residues 303–304 (RY).

This sequence belongs to the MnmA/TRMU family.

The protein resides in the cytoplasm. It carries out the reaction S-sulfanyl-L-cysteinyl-[protein] + uridine(34) in tRNA + AH2 + ATP = 2-thiouridine(34) in tRNA + L-cysteinyl-[protein] + A + AMP + diphosphate + H(+). Catalyzes the 2-thiolation of uridine at the wobble position (U34) of tRNA, leading to the formation of s(2)U34. The chain is tRNA-specific 2-thiouridylase MnmA from Akkermansia muciniphila (strain ATCC BAA-835 / DSM 22959 / JCM 33894 / BCRC 81048 / CCUG 64013 / CIP 107961 / Muc).